The primary structure comprises 47 residues: Thionin (47 aa).

Cystine bridges form between Cys3–Cys41, Cys4–Cys33, Cys12–Cys31, and Cys16–Cys27.

Belongs to the plant thionin (TC 1.C.44) family. 4 C-C subfamily.

The protein localises to the secreted. Its function is as follows. Thionins are small plant proteins which are toxic to animal cells. They seem to exert their toxic effect at the level of the cell membrane. Their precise function is not known. The sequence is that of Thionin (THI1) from Pyrularia pubera (Buffalo nut).